The chain runs to 436 residues: GTPase Der (436 aa).

EngA-type G domains follow at residues 4–167 (PVVA…KNLP) and 176–351 (VQFC…ENHA). GTP contacts are provided by residues 10–17 (GRPNVGKS), 57–61 (DTGGI), 119–122 (NKLD), 182–189 (GRPNVGKS), 229–233 (DTAGM), and 294–297 (NKWD). Positions 352–436 (MRVQTNILND…PIKIFARARK (85 aa)) constitute a KH-like domain.

Belongs to the TRAFAC class TrmE-Era-EngA-EngB-Septin-like GTPase superfamily. EngA (Der) GTPase family. As to quaternary structure, associates with the 50S ribosomal subunit.

Functionally, GTPase that plays an essential role in the late steps of ribosome biogenesis. In Bacillus pumilus (strain SAFR-032), this protein is GTPase Der.